A 150-amino-acid chain; its full sequence is Small heat shock protein HspE (150 aa).

The 111-residue stretch at 27 to 137 folds into the sHSP domain; sequence VDNGDTYPPY…KPRQIAIDVA (111 aa).

This sequence belongs to the small heat shock protein (HSP20) family.

This chain is Small heat shock protein HspE (hspE), found in Bradyrhizobium diazoefficiens (strain JCM 10833 / BCRC 13528 / IAM 13628 / NBRC 14792 / USDA 110).